Here is a 312-residue protein sequence, read N- to C-terminus: Calcium-independent mitochondrial carrier protein SCaMC-3L (312 aa).

Solcar repeat units follow at residues 27–113 (GTLW…SRNF), 121–206 (PSFQ…LRCL), and 217–304 (PSGL…MKKT). 6 consecutive transmembrane segments (helical) span residues 33–50 (LLSG…TAPL), 88–107 (GNGI…FSVF), 131–144 (SLAV…INPM), 182–200 (YLPN…LAVY), 219–243 (GLVS…LTLV), and 279–298 (GMTP…YLVY).

The protein belongs to the mitochondrial carrier (TC 2.A.29) family. As to expression, mainly expressed in testis and at lesser levels in brain.

It localises to the mitochondrion inner membrane. The catalysed reaction is Mg(2+)(out) + phosphate(in) + ATP(out) = Mg(2+)(in) + phosphate(out) + ATP(in). It catalyses the reaction ADP(out) + phosphate(in) + H(+)(out) = ADP(in) + phosphate(out) + H(+)(in). Its function is as follows. Calcium-independent ATP-Mg/Pi exchanger that catalyzes the electroneutral exchange of Mg-ATP or free ADP against an hydrogenphosphate and participates in the net transport of adenine nucleotides across the mitochondria inner membrane. The sequence is that of Calcium-independent mitochondrial carrier protein SCaMC-3L from Rattus norvegicus (Rat).